Here is a 331-residue protein sequence, read N- to C-terminus: PHD finger protein 11 (331 aa).

The C2HC pre-PHD-type zinc finger occupies 42–78 (KRTCALCPKDVEYNVLYFAQSENIAAHENCLLYSSGL). The segment at 108–160 (LKCKFCHKRGATVGCDLKNCNKNYHFFCAKKDDAVPQSDGVRGIYKLLCQQHA) adopts a PHD-type zinc-finger fold.

In terms of assembly, interacts with BRCA1 and RELA. As to expression, highly expressed in T and B-cells, as well as natural killer and mature dendritic cells. Expressed at higher levels in Th1 as compared to Th2 cells. Expressed at low levels in all normal tissues tested, including lung, testis, small intestine, breast, liver and placenta.

It is found in the nucleus. Its function is as follows. Positive regulator of Th1-type cytokine gene expression. The chain is PHD finger protein 11 (PHF11) from Homo sapiens (Human).